A 229-amino-acid polypeptide reads, in one-letter code: Prolactin (229 aa).

Residues Met1 to Ser30 form the signal peptide. Residues Cys34 and Cys41 are joined by a disulfide bond. Residue Ser56 is modified to Phosphoserine. The N-linked (GlcNAc...) asparagine glycan is linked to Asn61. Phosphoserine occurs at positions 64 and 120. 2 disulfide bridges follow: Cys88–Cys204 and Cys221–Cys229.

This sequence belongs to the somatotropin/prolactin family. In terms of assembly, interacts with PRLR.

It is found in the secreted. In terms of biological role, prolactin acts primarily on the mammary gland by promoting lactation. This is Prolactin (PRL) from Felis catus (Cat).